A 717-amino-acid polypeptide reads, in one-letter code: Patatin-like phospholipase domain-containing protein PGUG_03164 (717 aa).

Residues 123 to 143 (WPFLIIITVWILLLCILYTVV) traverse the membrane as a helical segment. The PNPLA domain maps to 298–490 (LCLSGGACFA…RTDIPIDALK (193 aa)). The short motif at 329 to 333 (GTSGG) is the GXSXG element. Catalysis depends on S331, which acts as the Nucleophile. D477 (proton acceptor) is an active-site residue. The tract at residues 680-717 (YDSESSAEETLSPGFSQGTHAVLTDESDDDSSDDEIDD) is disordered. Over residues 704–717 (DESDDDSSDDEIDD) the composition is skewed to acidic residues.

The protein belongs to the PLPL family.

It localises to the membrane. Its function is as follows. Probable lipid hydrolase. This is Patatin-like phospholipase domain-containing protein PGUG_03164 from Meyerozyma guilliermondii (strain ATCC 6260 / CBS 566 / DSM 6381 / JCM 1539 / NBRC 10279 / NRRL Y-324) (Yeast).